Consider the following 760-residue polypeptide: General transcription and DNA repair factor IIH helicase subunit XPD (760 aa).

Residues 7 to 283 (GLLVYFPYDY…KETDEQRLRD (277 aa)) form the Helicase ATP-binding domain. Residue 42 to 49 (MPSGTGKT) participates in ATP binding. [4Fe-4S] cluster is bound by residues Cys116, Cys134, Cys155, and Cys190. The DEAH box motif lies at 234-237 (DEAH). Positions 438 to 637 (MDASLAIKPV…TQSRILKARL (200 aa)) are mediates interaction with MMS19. The Nuclear localization signal signature appears at 682-695 (KRFARGDKRGKLPR).

Belongs to the helicase family. RAD3/XPD subfamily. As to quaternary structure, component of the 7-subunit TFIIH core complex composed of XPB/ERCC3, XPD/ERCC2, GTF2H1, GTF2H2, GTF2H3, GTF2H4 and GTF2H5, which is active in NER. The core complex associates with the 3-subunit CDK-activating kinase (CAK) module composed of CCNH/cyclin H, CDK7 and MNAT1 to form the 10-subunit holoenzyme (holo-TFIIH) active in transcription. Interacts with GTF2H2 (p44) which stimulates the 5'-3' helicase activity of this subunit. Component of the MMXD complex, which includes CIAO1, ERCC2, CIAO2B, MMS19 and SLC25A5. Interacts with CIAO1 and CIAO2B; the interaction WITH CIAO2B is direct. Interacts with ATF7IP. Interacts directly with MMS19. Part of TBP-based Pol II pre-initiation complex (PIC), in which Pol II core assembles with general transcription factors and other specific initiation factors including GTF2E1, GTF2E2, GTF2F1, GTF2F2, TCEA1, ERCC2, ERCC3, GTF2H2, GTF2H3, GTF2H4, GTF2H5, GTF2A1, GTF2A2, GTF2B and TBP; this large multi-subunit PIC complex mediates DNA unwinding and targets Pol II core to the transcription start site where the first phosphodiester bond forms. In terms of assembly, (Microbial infection) Interacts with Epstein-Barr virus EBNA2. The cofactor is Mg(2+). [4Fe-4S] cluster serves as cofactor. Post-translationally, ISGylated.

It localises to the nucleus. Its subcellular location is the cytoplasm. The protein resides in the cytoskeleton. The protein localises to the spindle. It carries out the reaction Couples ATP hydrolysis with the unwinding of duplex DNA at the replication fork by translocating in the 5'-3' direction. This creates two antiparallel DNA single strands (ssDNA). The leading ssDNA polymer is the template for DNA polymerase III holoenzyme which synthesizes a continuous strand.. The enzyme catalyses ATP + H2O = ADP + phosphate + H(+). Its activity is regulated as follows. Interaction with GTF2H2 (p44) results in stimulation of the 5'-3' helicase activity of this subunit. DNA unwinding by this subunit in TFIIH is stimulated 4-fold by XPA and 20-fold by ERCC5/XPG. Its function is as follows. ATP-dependent 5'-3' DNA helicase. Component of the general transcription and DNA repair factor IIH (TFIIH) core complex, not absolutely essential for minimal transcription in vitro. Required for transcription-coupled nucleotide excision repair (NER) of damaged DNA; recognizes damaged bases. Sequestered in chromatin on UV-damaged DNA. When complexed to CDK-activating kinase (CAK), involved in transcription by RNA polymerase II. In NER, TFIIH acts by opening DNA around the lesion to allow the excision of the damaged oligonucleotide and its replacement by a new DNA fragment. The ATP-dependent helicase activity of XPD/ERCC2 is required for DNA opening. Involved in DNA lesion verification. In transcription, TFIIH has an essential role in transcription initiation. When the pre-initiation complex (PIC) has been established, TFIIH is required for promoter opening and promoter escape. Phosphorylation of the C-terminal tail (CTD) of the largest subunit of RNA polymerase II by the kinase module CAK controls the initiation of transcription. XPD/ERCC2 acts by forming a bridge between CAK and the core-TFIIH complex. The structure of the TFIIH transcription complex differs from the NER-TFIIH complex; large movements by XPD/ERCC2 and XPB/ERCC3 are stabilized by XPA which allow this subunit to contact ssDNA. Involved in the regulation of vitamin-D receptor activity. As part of the mitotic spindle-associated MMXD complex it plays a role in chromosome segregation. Might have a role in aging process and could play a causative role in the generation of skin cancers. This is General transcription and DNA repair factor IIH helicase subunit XPD (ERCC2) from Homo sapiens (Human).